Here is a 186-residue protein sequence, read N- to C-terminus: Peptidyl-tRNA hydrolase (186 aa).

Tyrosine 16 is a binding site for tRNA. Histidine 21 serves as the catalytic Proton acceptor. Tyrosine 60 and asparagine 62 together coordinate tRNA.

Belongs to the PTH family. Monomer.

The protein localises to the cytoplasm. It catalyses the reaction an N-acyl-L-alpha-aminoacyl-tRNA + H2O = an N-acyl-L-amino acid + a tRNA + H(+). In terms of biological role, hydrolyzes ribosome-free peptidyl-tRNAs (with 1 or more amino acids incorporated), which drop off the ribosome during protein synthesis, or as a result of ribosome stalling. Functionally, catalyzes the release of premature peptidyl moieties from peptidyl-tRNA molecules trapped in stalled 50S ribosomal subunits, and thus maintains levels of free tRNAs and 50S ribosomes. The protein is Peptidyl-tRNA hydrolase of Tropheryma whipplei (strain TW08/27) (Whipple's bacillus).